A 178-amino-acid chain; its full sequence is Meiotically up-regulated gene 95 protein (178 aa).

The Cytoplasmic portion of the chain corresponds to Met-1–Thr-12. Residues Leu-13 to Phe-30 form a helical; Signal-anchor for type II membrane protein membrane-spanning segment. At Lys-31 to Asn-178 the chain is on the lumenal side.

Its subcellular location is the endoplasmic reticulum membrane. Functionally, has a role in meiosis. This is Meiotically up-regulated gene 95 protein (mug95) from Schizosaccharomyces pombe (strain 972 / ATCC 24843) (Fission yeast).